The sequence spans 1786 residues: Transcription initiation factor TFIID subunit 1b (1786 aa).

Disordered regions lie at residues 54 to 83 and 350 to 372; these read EDYD…PVVL and FGSR…PQLL. The segment covering 61–83 has biased composition (basic and acidic residues); that stretch reads GQEKEHVPVEKSFDSEEREPVVL. The span at 352–362 shows a compositional bias: polar residues; that stretch reads SRGSQSTNEST. In terms of domain architecture, Ubiquitin-like spans 574 to 650; it reads MTIVVKSLGG…VHLLRTKVHL (77 aa). Positions 1303-1313 are enriched in basic residues; that stretch reads MKTNKHCPKYR. Disordered stretches follow at residues 1303-1382, 1397-1471, and 1596-1634; these read MKTN…DVAA, LKIS…KDQA, and SERE…ESGQ. The span at 1357–1377 shows a compositional bias: polar residues; the sequence is TKISVNEATKVGDSTSKTPGS. Residues 1397 to 1407 are compositionally biased toward basic residues; that stretch reads LKISSKAKPKA. Polar residues predominate over residues 1433 to 1464; sequence HNPSVSGQLLPSTETDQAASSRYTTSVPQPSL. Coiled coils occupy residues 1591-1620 and 1752-1786; these read REVI…LENY and LADE…DSLR. The span at 1604–1613 shows a compositional bias: basic residues; that stretch reads RKAKQKKKLQ. Residues 1656–1774 form the Bromo domain; it reads KRRKKGQVGL…DEYRDELKEA (119 aa).

It belongs to the TAF1 family. As to quaternary structure, component of the TFIID complex. TFIID is composed of TATA binding protein (TBP) and a number of TBP-associated factors (TAFs) whose MWs range from 14-217 kDa. Expressed in roots, shoots, leaves and inflorescences.

It localises to the nucleus. Functionally, TAFs are components of the transcription factor IID (TFIID) complex that is essential for mediating regulation of RNA polymerase transcription. Core scaffold of the TFIID complex. Acts as a histone acetyltransferase involved in the light regulation of growth and gene expression. Required for H3K9, H3K27, and H4K12 acetylation on the target promoters. This is Transcription initiation factor TFIID subunit 1b (TAF1B) from Arabidopsis thaliana (Mouse-ear cress).